The primary structure comprises 219 residues: Poxin (219 aa).

The active-site Proton donor is the His-17. Tyr-138 (shared with catalytic histidine of dimeric partner) is an active-site residue. Lys-142 (proton acceptor; shared with catalytic histidine of dimeric partner) is an active-site residue.

This sequence belongs to the poxin family. In terms of assembly, homodimer.

The enzyme catalyses 2',3'-cGAMP + H2O = Gp(2'-5')Ap(3') + H(+). In terms of biological role, nuclease that is responsible for viral evasion of host cGAS-STING innate immunity. Cleaves 2',3'-cGAMP which is produced by host cGAS following recognition of cytosolic DNA and blocks the subsequent 2',3'-cGAMP-mediated activation of TMEM173/STING, which normally spreads to adjacent cells and activates the interferon and NF-kappa-B immune responses. The chain is Poxin (OPG188) from Homo sapiens (Human).